The following is a 375-amino-acid chain: Actin, cytoplasmic (375 aa).

It belongs to the actin family.

It localises to the cytoplasm. Its subcellular location is the cytoskeleton. It carries out the reaction ATP + H2O = ADP + phosphate + H(+). Functionally, actins are highly conserved proteins that are involved in various types of cell motility and are ubiquitously expressed in all eukaryotic cells. The polypeptide is Actin, cytoplasmic (Oxytricha trifallax (Sterkiella histriomuscorum)).